Consider the following 314-residue polypeptide: Putative S-adenosyl-L-methionine-dependent methyltransferase MRA_3805 (314 aa).

Residues Asp-132 and 161–162 contribute to the S-adenosyl-L-methionine site; that span reads DL.

This sequence belongs to the UPF0677 family.

Functionally, exhibits S-adenosyl-L-methionine-dependent methyltransferase activity. The protein is Putative S-adenosyl-L-methionine-dependent methyltransferase MRA_3805 of Mycobacterium tuberculosis (strain ATCC 25177 / H37Ra).